A 652-amino-acid polypeptide reads, in one-letter code: DNA ligase (652 aa).

NAD(+) contacts are provided by residues 29 to 33 (DSQYD), 78 to 79 (SL), and Glu107. The N6-AMP-lysine intermediate role is filled by Lys109. NAD(+) is bound by residues Arg130, Glu164, Lys278, and Lys302. Residues Cys395, Cys398, Cys413, and Cys418 each contribute to the Zn(2+) site. The BRCT domain maps to 577–652 (STDAQLSGLT…IQDEDWLLNL (76 aa)).

It belongs to the NAD-dependent DNA ligase family. LigA subfamily. The cofactor is Mg(2+). Mn(2+) is required as a cofactor.

It carries out the reaction NAD(+) + (deoxyribonucleotide)n-3'-hydroxyl + 5'-phospho-(deoxyribonucleotide)m = (deoxyribonucleotide)n+m + AMP + beta-nicotinamide D-nucleotide.. Functionally, DNA ligase that catalyzes the formation of phosphodiester linkages between 5'-phosphoryl and 3'-hydroxyl groups in double-stranded DNA using NAD as a coenzyme and as the energy source for the reaction. It is essential for DNA replication and repair of damaged DNA. The polypeptide is DNA ligase (Streptococcus agalactiae serotype III (strain NEM316)).